The chain runs to 201 residues: uncharacterized protein (201 aa).

The tract at residues 1–22 (MAASKAAKSSEDRAGGGGGGGG) is disordered.

This is an uncharacterized protein from Tomato ringspot virus (isolate raspberry) (ToRSV).